A 167-amino-acid chain; its full sequence is HTH-type transcriptional repressor YetL (167 aa).

The HTH marR-type domain occupies 26–160; sequence SLELFLSLFD…FVKMLGDLFE (135 aa). Residues 74-97 constitute a DNA-binding region (H-T-H motif); that stretch reads PTELAKRSNVTKATITGLLDGLAR.

As to quaternary structure, homodimer. The N- and C-terminal helices from both subunits stabilize YetL dimer via extensive intersubunit interactions.

Its activity is regulated as follows. Binding to the yetM cis sequence is clearly inhibited by kaempferol, morin, apigenin and luteolin, slightly inhibited by quercetin and galangin, but no inhibition is observed with the other flavonoids. Flavonoid binding may induce conformational changes and modulate interaction with DNA. Negatively regulates yetM expression and its own expression. Binds specifically to corresponding single sites in the divergent yetL and yetM promoter regions, with higher affinity to the yetM region. Recognizes a 28-mer operator of double-stranded DNA that contains a palindromic sequence. This Bacillus subtilis (strain 168) protein is HTH-type transcriptional repressor YetL (yetL).